Here is a 300-residue protein sequence, read N- to C-terminus: LHMIHLHWYQYPPMNPMMYPLLLVFMLITGILCLAGNFVTIWVFMNTKSLRTPANLLVVNLAMSDFLMMFTMFPPMMVTCYYHTWTLGATFCQVYAFLGNLCGCASIWTMVFITFDRYNVIVKGVAGEPLSTKKASLWILTIWILSITWCIAPFFGWNRYVPEGNTGCGTDYLSEDILSRSYLYIYSTWVYFLPLAITIYCHVFIIKAVAAHEKGMRDQAKKMGIKSLRNEEAQKTSAECRLAKIAMTTVALWFIAWTPYLLINWVGMFARSYLSPVYTIWGYVFAKANAVYNPIVYAIS.

Over 1–18 (LHMIHLHWYQYPPMNPMM) the chain is Extracellular. Residues 19–43 (YPLLLVFMLITGILCLAGNFVTIWV) form a helical membrane-spanning segment. Residues 44 to 55 (FMNTKSLRTPAN) lie on the Cytoplasmic side of the membrane. Residues 56-78 (LLVVNLAMSDFLMMFTMFPPMMV) form a helical membrane-spanning segment. Over 79–92 (TCYYHTWTLGATFC) the chain is Extracellular. Cys-92 and Cys-168 are oxidised to a cystine. Residues 93–115 (QVYAFLGNLCGCASIWTMVFITF) form a helical membrane-spanning segment. The 'Ionic lock' involved in activated form stabilization motif lies at 116–118 (DRY). The Cytoplasmic segment spans residues 116–134 (DRYNVIVKGVAGEPLSTKK). Residues 135–155 (ASLWILTIWILSITWCIAPFF) traverse the membrane as a helical segment. The Extracellular segment spans residues 156–181 (GWNRYVPEGNTGCGTDYLSEDILSRS). Residues 182 to 203 (YLYIYSTWVYFLPLAITIYCHV) form a helical membrane-spanning segment. Over 204–244 (FIIKAVAAHEKGMRDQAKKMGIKSLRNEEAQKTSAECRLAK) the chain is Cytoplasmic. The chain crosses the membrane as a helical span at residues 245–266 (IAMTTVALWFIAWTPYLLINWV). The Extracellular segment spans residues 267-277 (GMFARSYLSPV). The helical transmembrane segment at 278–299 (YTIWGYVFAKANAVYNPIVYAI) threads the bilayer. An N6-(retinylidene)lysine modification is found at Lys-287.

It belongs to the G-protein coupled receptor 1 family. Opsin subfamily. Homodimer. Interacts with GNAQ. Post-translationally, contains one covalently linked retinal chromophore.

The protein localises to the cell projection. It localises to the rhabdomere membrane. Functionally, photoreceptor required for image-forming vision at low light intensity. Can use both retinal and 3-dehydroretinal as visual pigment. Light-induced isomerization of 11-cis to all-trans retinal triggers a conformational change that activates signaling via G-proteins. Signaling via GNAQ probably mediates the activation of phospholipase C. In Cambarus maculatus (Freckled crayfish), this protein is Rhodopsin (RHO).